A 421-amino-acid polypeptide reads, in one-letter code: Glutamate dehydrogenase (421 aa).

Lys105 is an active-site residue. Gly220 to Tyr226 contacts NAD(+).

This sequence belongs to the Glu/Leu/Phe/Val dehydrogenases family. Homohexamer.

It localises to the cytoplasm. The protein localises to the chromosome. The catalysed reaction is L-glutamate + NAD(+) + H2O = 2-oxoglutarate + NH4(+) + NADH + H(+). It catalyses the reaction L-glutamate + NADP(+) + H2O = 2-oxoglutarate + NH4(+) + NADPH + H(+). This chain is Glutamate dehydrogenase (gdhA), found in Thermococcus kodakarensis (strain ATCC BAA-918 / JCM 12380 / KOD1) (Pyrococcus kodakaraensis (strain KOD1)).